Here is a 417-residue protein sequence, read N- to C-terminus: Serine hydroxymethyltransferase (417 aa).

(6S)-5,6,7,8-tetrahydrofolate is bound by residues leucine 121 and 125 to 127 (GHL). Lysine 229 bears the N6-(pyridoxal phosphate)lysine mark. Position 355 to 357 (355 to 357 (SPF)) interacts with (6S)-5,6,7,8-tetrahydrofolate.

The protein belongs to the SHMT family. In terms of assembly, homodimer. Pyridoxal 5'-phosphate serves as cofactor.

The protein localises to the cytoplasm. It carries out the reaction (6R)-5,10-methylene-5,6,7,8-tetrahydrofolate + glycine + H2O = (6S)-5,6,7,8-tetrahydrofolate + L-serine. Its pathway is one-carbon metabolism; tetrahydrofolate interconversion. It functions in the pathway amino-acid biosynthesis; glycine biosynthesis; glycine from L-serine: step 1/1. Functionally, catalyzes the reversible interconversion of serine and glycine with tetrahydrofolate (THF) serving as the one-carbon carrier. This reaction serves as the major source of one-carbon groups required for the biosynthesis of purines, thymidylate, methionine, and other important biomolecules. Also exhibits THF-independent aldolase activity toward beta-hydroxyamino acids, producing glycine and aldehydes, via a retro-aldol mechanism. The sequence is that of Serine hydroxymethyltransferase from Xanthomonas campestris pv. campestris (strain 8004).